The primary structure comprises 209 residues: MGAILGKKIGMTRLYNEKREAVPCTIIQAGPCFVTQVKSAGIDGYDAYQVGIGERKEAKVTKPMLGHYKKAGVAPGYMTAEFDTSMFDGELTAGSPVLVESFTEGEIVKVQGVSKGKGFAGVVKRHNFGGGQRTHGQSDRLRAPGSIGGASDPSKTFKGTKMGGRMGSDTITVRNLQVIKIMPESSLIMVKGSVPGPKNSYVRIVSTKK.

The tract at residues 127 to 166 (NFGGGQRTHGQSDRLRAPGSIGGASDPSKTFKGTKMGGRM) is disordered.

Belongs to the universal ribosomal protein uL3 family. In terms of assembly, part of the 50S ribosomal subunit. Forms a cluster with proteins L14 and L19.

Functionally, one of the primary rRNA binding proteins, it binds directly near the 3'-end of the 23S rRNA, where it nucleates assembly of the 50S subunit. This chain is Large ribosomal subunit protein uL3, found in Chlorobium phaeovibrioides (strain DSM 265 / 1930) (Prosthecochloris vibrioformis (strain DSM 265)).